Consider the following 1201-residue polypeptide: uncharacterized protein (1201 aa).

A helical membrane pass occupies residues 140–160 (IIINLIFFFAFIIVGIYLFKP). Coiled coils occupy residues 420-459 (QKKQ…AELN) and 536-574 (AIKA…ITKM).

The protein resides in the cell membrane. This is an uncharacterized protein from Bacillus subtilis (strain 168).